Reading from the N-terminus, the 251-residue chain is Ubiquinone/menaquinone biosynthesis C-methyltransferase UbiE (251 aa).

Residues threonine 74, aspartate 95, 123 to 124, and serine 140 contribute to the S-adenosyl-L-methionine site; that span reads NA.

This sequence belongs to the class I-like SAM-binding methyltransferase superfamily. MenG/UbiE family.

It catalyses the reaction a 2-demethylmenaquinol + S-adenosyl-L-methionine = a menaquinol + S-adenosyl-L-homocysteine + H(+). The catalysed reaction is a 2-methoxy-6-(all-trans-polyprenyl)benzene-1,4-diol + S-adenosyl-L-methionine = a 5-methoxy-2-methyl-3-(all-trans-polyprenyl)benzene-1,4-diol + S-adenosyl-L-homocysteine + H(+). It functions in the pathway quinol/quinone metabolism; menaquinone biosynthesis; menaquinol from 1,4-dihydroxy-2-naphthoate: step 2/2. Its pathway is cofactor biosynthesis; ubiquinone biosynthesis. Functionally, methyltransferase required for the conversion of demethylmenaquinol (DMKH2) to menaquinol (MKH2) and the conversion of 2-polyprenyl-6-methoxy-1,4-benzoquinol (DDMQH2) to 2-polyprenyl-3-methyl-6-methoxy-1,4-benzoquinol (DMQH2). In Yersinia enterocolitica serotype O:8 / biotype 1B (strain NCTC 13174 / 8081), this protein is Ubiquinone/menaquinone biosynthesis C-methyltransferase UbiE.